The sequence spans 78 residues: Large ribosomal subunit protein bL28 (78 aa).

The interval 1–27 is disordered; it reads MSAYCQVTGRKPSFGKSVSHSHRRTNR.

It belongs to the bacterial ribosomal protein bL28 family.

The polypeptide is Large ribosomal subunit protein bL28 (Corynebacterium kroppenstedtii (strain DSM 44385 / JCM 11950 / CIP 105744 / CCUG 35717)).